Here is a 148-residue protein sequence, read N- to C-terminus: 3-dehydroquinate dehydratase (148 aa).

Catalysis depends on Tyr-23, which acts as the Proton acceptor. Residues Asn-74, His-80, and Asp-87 each contribute to the substrate site. His-100 functions as the Proton donor in the catalytic mechanism. Residues 101-102 (IS) and Arg-111 contribute to the substrate site.

It belongs to the type-II 3-dehydroquinase family. Homododecamer.

It carries out the reaction 3-dehydroquinate = 3-dehydroshikimate + H2O. It participates in metabolic intermediate biosynthesis; chorismate biosynthesis; chorismate from D-erythrose 4-phosphate and phosphoenolpyruvate: step 3/7. Catalyzes a trans-dehydration via an enolate intermediate. In Thermoanaerobacter pseudethanolicus (strain ATCC 33223 / 39E) (Clostridium thermohydrosulfuricum), this protein is 3-dehydroquinate dehydratase.